A 242-amino-acid chain; its full sequence is Small ribosomal subunit protein uS3 (242 aa).

One can recognise a KH type-2 domain in the interval 39–109; that stretch reads IRQYVEKNLA…QIRINVIEVA (71 aa). The tract at residues 220–242 is disordered; sequence VPAQAPRRQQRRRQQFEDRSSEG. A compositionally biased stretch (basic and acidic residues) spans 233-242; the sequence is QQFEDRSSEG.

Belongs to the universal ribosomal protein uS3 family. Part of the 30S ribosomal subunit. Forms a tight complex with proteins S10 and S14.

In terms of biological role, binds the lower part of the 30S subunit head. Binds mRNA in the 70S ribosome, positioning it for translation. The chain is Small ribosomal subunit protein uS3 from Microcystis aeruginosa (strain NIES-843 / IAM M-2473).